The primary structure comprises 908 residues: MFGKLLTKVFGSRNDRTLKGLQKVVNKINALEADYEKLTDEQLKAKTAEFRERLAAGASLESIMAEAFATVREASKRVFEMRHFDVQLLGGMVLDSNRIAEMRTGEGKTLTATLPAYLNALTGKGVHVITVNDYLARRDAENNRPLFEFLGLTVGINVAGLGQQAKKDAYNADITYGTNNEFGFDYLRDNMAFSPQERVQRPLHYALIDEVDSILIDEARTPLIISGAAEDSSELYIKINTLIPNLIRQDKEDSEEYVGEGDYSIDEKAKQVHFTERGQEKVENLLIERGMLAEGDSLYSAANISLLHHVNAALRAHTLFERDVDYIVQDGEVIIVDEHTGRTMPGRRWSEGLHQAVEAKEGVRIQNENQTLASITFQNYFRLYEKLAGMTGTADTEAFEFQHIYGLDTVVVPTNRPMVRKDMADLVYLTANEKYQAIIKDIKDCRERGQPVLVGTVSIEQSELLARLMVKEKIPHQVLNAKFHEKEAEIVAQAGRTGAVTIATNMAGRGTDIVLGGNWNMEIEALENPTAEQKAKIKADWQERHDAVVAAGGLHILGTERHESRRIDNQLRGRAGRQGDAGSSRFYLSMEDSLMRIFASDRVSGMMKKLGMEEGEAIEHPWVSRAIENAQRKVEARNFDIRKQLLEFDDVANDQRQVVYAQRNELMDAESIEDTIKNIQDDVISAVIDQYIPPQSVEELWDVPGLEQRLQQEFMLKLPIQEWLDKEDDLHEETLRERIITSWSDAYKAKEEMVGAPVLRQFEKAVMLQTLDGLWKEHLAAMDHLRQGIHLRGYAQKNPKQEYKRESFELFQQLLSTLKHDVISVLSKVQVQAQSDVEEMEARRREEDAKIQRDYQHAAAEALVGGDDGSDEMMAHTPMIRDGDKVGRNDPCPCGSGRKYKQCHGKLS.

ATP contacts are provided by residues glutamine 87, 105-109, and aspartate 512; that span reads GEGKT. The interval 865-908 is disordered; sequence GGDDGSDEMMAHTPMIRDGDKVGRNDPCPCGSGRKYKQCHGKLS. Basic and acidic residues predominate over residues 879 to 888; that stretch reads MIRDGDKVGR. Residues cysteine 892, cysteine 894, cysteine 903, and histidine 904 each contribute to the Zn(2+) site. Residues 898 to 908 are compositionally biased toward basic residues; the sequence is RKYKQCHGKLS.

The protein belongs to the SecA family. As to quaternary structure, monomer and homodimer. Part of the essential Sec protein translocation apparatus which comprises SecA, SecYEG and auxiliary proteins SecDF-YajC and YidC. It depends on Zn(2+) as a cofactor.

The protein localises to the cell inner membrane. It localises to the cytoplasm. It catalyses the reaction ATP + H2O + cellular proteinSide 1 = ADP + phosphate + cellular proteinSide 2.. In terms of biological role, part of the Sec protein translocase complex. Interacts with the SecYEG preprotein conducting channel. Has a central role in coupling the hydrolysis of ATP to the transfer of proteins into and across the cell membrane, serving both as a receptor for the preprotein-SecB complex and as an ATP-driven molecular motor driving the stepwise translocation of polypeptide chains across the membrane. The protein is Protein translocase subunit SecA of Shewanella sp. (strain MR-4).